Here is a 618-residue protein sequence, read N- to C-terminus: Glutamine--fructose-6-phosphate aminotransferase [isomerizing] (618 aa).

C2 acts as the Nucleophile; for GATase activity in catalysis. In terms of domain architecture, Glutamine amidotransferase type-2 spans 2–226; the sequence is CGIVGYAGRN…DFETAVLTPD (225 aa). The tract at residues 72 to 91 is disordered; sequence WATHGRPSTENAHPHNSGGN. SIS domains are found at residues 295 to 434 and 467 to 608; these read NDDE…VRGK and CAEN…IDKP. K613 serves as the catalytic For Fru-6P isomerization activity.

In terms of assembly, homodimer.

The protein resides in the cytoplasm. It carries out the reaction D-fructose 6-phosphate + L-glutamine = D-glucosamine 6-phosphate + L-glutamate. Its function is as follows. Catalyzes the first step in hexosamine metabolism, converting fructose-6P into glucosamine-6P using glutamine as a nitrogen source. This Methanosarcina mazei (strain ATCC BAA-159 / DSM 3647 / Goe1 / Go1 / JCM 11833 / OCM 88) (Methanosarcina frisia) protein is Glutamine--fructose-6-phosphate aminotransferase [isomerizing].